The primary structure comprises 449 residues: Adenylosuccinate synthetase isozyme 1 B (449 aa).

GTP-binding positions include 34–40 and 62–64; these read GDEGKGK and GHT. D35 acts as the Proton acceptor in catalysis. Residues D35 and G62 each coordinate Mg(2+). D35 serves as a coordination point for substrate. IMP-binding positions include 35-38, 60-63, T155, R169, N248, T263, and R327; these read DEGK and NAGH. H63 acts as the Proton donor in catalysis. 323–329 serves as a coordination point for substrate; sequence VTTGRKR. Residues R329, 355-357, and 437-440 each bind GTP; these read KLD and GVGK.

The protein belongs to the adenylosuccinate synthetase family. In terms of assembly, homodimer. The cofactor is Mg(2+).

It is found in the cytoplasm. The enzyme catalyses IMP + L-aspartate + GTP = N(6)-(1,2-dicarboxyethyl)-AMP + GDP + phosphate + 2 H(+). It functions in the pathway purine metabolism; AMP biosynthesis via de novo pathway; AMP from IMP: step 1/2. Component of the purine nucleotide cycle (PNC), which interconverts IMP and AMP to regulate the nucleotide levels in various tissues, and which contributes to glycolysis and ammoniagenesis. Catalyzes the first committed step in the biosynthesis of AMP from IMP. This chain is Adenylosuccinate synthetase isozyme 1 B (adss1b), found in Salmo salar (Atlantic salmon).